The following is a 466-amino-acid chain: Ribosome biogenesis protein YTM1 (466 aa).

The tract at residues 11–99 is ubiquitin-like (UBL) domain; that stretch reads IKIKFFTNEE…EAFLTLEYTR (89 aa). Residues 109-466 are sufficient for interaction with ERB1 and association with 66S pre-ribosomes; it reads SFNNDDWISS…QINKGSDIAK (358 aa). WD repeat units lie at residues 124–163, 165–203, 219–258, 296–336, 338–377, 384–424, and 431–466; these read PTTKIVMSSQLSISQPKILSGSYDGIVRTYNMSGKVEKQY, GHSAPVKAVKWISPTRIVSAGNDRQVRLWKTSYEEIIDE, GHKAPVVDLAVDTQTNRILSAGYDQNIGFWSTNYKEMTSI, GHSE…CVDT, TTGYSLLSVLQLPQVNLIASGSSARHINLHDPRVTTTSDQ, GHTN…SLYT, and STNAKIFDVCWDDRIGIISGGEDKKLQINKGSDIAK.

Belongs to the WD repeat WDR12/YTM1 family. In terms of assembly, component of the NOP7 complex, composed of ERB1, NOP7 and YTM1. The complex is held together by ERB1, which interacts with NOP7 via its N-terminal domain and with YTM1 via a high-affinity interaction between the seven-bladed beta-propeller domains of the 2 proteins. The NOP7 complex associates with the 66S pre-ribosome. Interacts (via UBL domain) with MDN1 (via VWFA/MIDAS domain).

It is found in the nucleus. The protein localises to the nucleolus. The protein resides in the nucleoplasm. Its function is as follows. Component of the NOP7 complex, which is required for maturation of the 25S and 5.8S ribosomal RNAs and formation of the 60S ribosome. In Candida albicans (strain SC5314 / ATCC MYA-2876) (Yeast), this protein is Ribosome biogenesis protein YTM1.